Consider the following 504-residue polypeptide: Sodium/proline symporter (504 aa).

The next 13 helical transmembrane spans lie at 8 to 28 (LITF…AYYY), 50 to 70 (SAGA…AVYL), 73 to 93 (LVEG…WLLV), 127 to 147 (LVSA…GVVA), 163 to 183 (ALWY…FLAV), 189 to 209 (IQAT…LLSF), 240 to 260 (LGLL…HILA), 281 to 301 (WMVL…PYFF), 324 to 344 (LLFN…AVMS), 374 to 394 (ELVW…IWIA), 405 to 425 (VEFA…FSLF), 434 to 454 (AMAG…VVPA), and 461 to 481 (VYEM…ISLL).

The protein belongs to the sodium:solute symporter (SSF) (TC 2.A.21) family.

Its subcellular location is the cell inner membrane. The enzyme catalyses L-proline(in) + Na(+)(in) = L-proline(out) + Na(+)(out). In terms of biological role, catalyzes the sodium-dependent uptake of extracellular L-proline. The chain is Sodium/proline symporter (putP) from Haemophilus influenzae (strain ATCC 51907 / DSM 11121 / KW20 / Rd).